A 117-amino-acid polypeptide reads, in one-letter code: Large ribosomal subunit protein uL22 (117 aa).

The protein belongs to the universal ribosomal protein uL22 family. Part of the 50S ribosomal subunit.

In terms of biological role, this protein binds specifically to 23S rRNA; its binding is stimulated by other ribosomal proteins, e.g. L4, L17, and L20. It is important during the early stages of 50S assembly. It makes multiple contacts with different domains of the 23S rRNA in the assembled 50S subunit and ribosome. Functionally, the globular domain of the protein is located near the polypeptide exit tunnel on the outside of the subunit, while an extended beta-hairpin is found that lines the wall of the exit tunnel in the center of the 70S ribosome. In Lactobacillus helveticus (strain DPC 4571), this protein is Large ribosomal subunit protein uL22.